We begin with the raw amino-acid sequence, 193 residues long: Glycerol-3-phosphate acyltransferase (193 aa).

The next 5 membrane-spanning stretches (helical) occupy residues 4 to 24 (LALI…AVLI), 56 to 76 (GLVL…GYFL), 80 to 100 (PLLL…PLFF), 116 to 136 (APIG…IVLI), and 152 to 174 (PLFT…CLIV).

This sequence belongs to the PlsY family. Probably interacts with PlsX.

The protein localises to the cell inner membrane. The catalysed reaction is an acyl phosphate + sn-glycerol 3-phosphate = a 1-acyl-sn-glycero-3-phosphate + phosphate. It functions in the pathway lipid metabolism; phospholipid metabolism. Catalyzes the transfer of an acyl group from acyl-phosphate (acyl-PO(4)) to glycerol-3-phosphate (G3P) to form lysophosphatidic acid (LPA). This enzyme utilizes acyl-phosphate as fatty acyl donor, but not acyl-CoA or acyl-ACP. The sequence is that of Glycerol-3-phosphate acyltransferase from Aliivibrio salmonicida (strain LFI1238) (Vibrio salmonicida (strain LFI1238)).